A 70-amino-acid polypeptide reads, in one-letter code: Cold shock-like protein CspH (70 aa).

One can recognise a CSD domain in the interval 7-67 (GIVKTFDCKS…GLRGPTAANV (61 aa)).

It localises to the cytoplasm. The polypeptide is Cold shock-like protein CspH (cspH) (Salmonella typhi).